A 1476-amino-acid polypeptide reads, in one-letter code: SH3 and multiple ankyrin repeat domains protein 2 (1476 aa).

Polar residues predominate over residues Leu-66–Ser-76. Positions Leu-66–Phe-134 are disordered. Positions Val-147–Cys-206 constitute an SH3 domain. Val-162 is subject to Phosphoserine. Positions Thr-247 to Thr-341 constitute a PDZ domain. Ser-372 bears the Phosphoserine mark. The interval Arg-391 to Asn-412 is disordered. The residue at position 456 (Ser-456) is a Phosphoserine. Position 485 is a phosphothreonine (Thr-485). Positions Leu-503–Cys-533 are disordered. Pro residues predominate over residues Ile-512–Pro-528. Ser-586 carries the phosphoserine modification. Disordered stretches follow at residues Thr-659 to Arg-916, Val-946 to Ala-983, and Pro-1057 to Asp-1153. Residues Ser-666 to Ser-678 are compositionally biased toward low complexity. Residues Val-711 to Arg-722 are compositionally biased toward basic and acidic residues. Ser-724 is subject to Phosphoserine. The segment covering Leu-783 to Gly-795 has biased composition (gly residues). A compositionally biased stretch (low complexity) spans Arg-833 to Ser-846. 2 stretches are compositionally biased toward basic and acidic residues: residues Ala-847 to Leu-868 and Arg-899 to Arg-916. Residue Thr-903 is modified to Phosphothreonine. Residues Thr-1070–Thr-1085 show a composition bias toward polar residues. The segment covering Val-1119–Glu-1130 has biased composition (basic and acidic residues). Over residues Thr-1131–Ser-1151 the composition is skewed to low complexity. The short motif at Pro-1169–Pro-1175 is the SH3-binding element. 2 disordered regions span residues Glu-1195 to Ala-1216 and Asn-1260 to Lys-1403. Pro residues predominate over residues Ile-1202–Gly-1212. Positions Ser-1291–Val-1305 are enriched in low complexity. An O-linked (GlcNAc) threonine glycan is attached at Thr-1292. Residues Pro-1307–Ser-1317 show a composition bias toward polar residues. Residues Ser-1334 and Ser-1338 each carry the phosphoserine modification. Over residues Leu-1364–Pro-1375 the composition is skewed to polar residues. The segment covering Arg-1387–Ser-1401 has biased composition (low complexity). The 64-residue stretch at Trp-1413–Arg-1476 folds into the SAM domain.

Belongs to the SHANK family. In terms of assembly, is part of a complex with DLG4/PSD-95 and DLGAP1/GKAP. Interacts with CTTN/cortactin SH3 domain, DLGAP1/GKAP and alpha-latrotoxin receptor 1. Interacts with DNM2, DBNL, GRID2, BAIAP2, SLC9A3, PLCB3 and CFTR. Interacts (via proline-rich region) with PDE4D. Interacts with ABI1 (via SH3 domain). In terms of tissue distribution, detected in brain (at protein level), where it is highly expressed in Purkinje cells.

The protein localises to the apical cell membrane. Its subcellular location is the cytoplasm. It localises to the synapse. The protein resides in the postsynaptic density. It is found in the cell projection. The protein localises to the dendritic spine. Its subcellular location is the growth cone. Seems to be an adapter protein in the postsynaptic density (PSD) of excitatory synapses that interconnects receptors of the postsynaptic membrane including NMDA-type and metabotropic glutamate receptors, and the actin-based cytoskeleton. May play a role in the structural and functional organization of the dendritic spine and synaptic junction. This is SH3 and multiple ankyrin repeat domains protein 2 (Shank2) from Mus musculus (Mouse).